Consider the following 107-residue polypeptide: Protein p13 MTCP-1 (107 aa).

Belongs to the TCL1 family. As to quaternary structure, interacts with AKT1 and AKT2 (via PH domain). Does not interact with AKT3. In terms of tissue distribution, not found at a significant level in any tissue.

In terms of biological role, enhances the phosphorylation and activation of AKT1 and AKT2. In Mus musculus (Mouse), this protein is Protein p13 MTCP-1 (Mtcp1).